The chain runs to 580 residues: Myb-like protein C (580 aa).

Disordered regions lie at residues 1 to 58 (MTMI…YGSN), 73 to 101 (QYSI…TLLS), 121 to 203 (NVYN…SSTN), and 354 to 380 (SDND…NPPN). Composition is skewed to low complexity over residues 20 to 47 (NNNN…NNNN), 87 to 101 (NSTM…TLLS), and 126 to 203 (PHQS…SSTN). Positions 361 to 371 (KKKRERIRKSV) are enriched in basic residues. HTH myb-type domains are found at residues 368 to 430 (RKSV…CPAI) and 431 to 482 (RKGS…SREV). 2 consecutive DNA-binding regions (H-T-H motif) follow at residues 402 to 426 (WKKI…KRVL) and 454 to 478 (WKNV…KSCM). The Myb-like domain occupies 484–546 (WSSREDEILQ…ECKTRYFQLN (63 aa)).

It localises to the nucleus. Transcription activator required for the culmination, at the time of the fruiting body formation. Regulates genes involved in the cell differentiation within the fruiting body. The chain is Myb-like protein C (mybC) from Dictyostelium discoideum (Social amoeba).